Reading from the N-terminus, the 331-residue chain is Ketol-acid reductoisomerase (NADP(+)) (331 aa).

Positions 2 to 182 constitute a KARI N-terminal Rossmann domain; it reads AKMYYDKDAD…GGTRAGVIET (181 aa). NADP(+) contacts are provided by residues 25-28, S51, S53, and 83-86; these read FGSQ and DEKQ. Residue H108 is part of the active site. An NADP(+)-binding site is contributed by G134. One can recognise a KARI C-terminal knotted domain in the interval 183-328; it reads TFKEETETDL…KGLREMMAWI (146 aa). 4 residues coordinate Mg(2+): D191, E195, E227, and E231. S252 lines the substrate pocket.

It belongs to the ketol-acid reductoisomerase family. The cofactor is Mg(2+).

The catalysed reaction is (2R)-2,3-dihydroxy-3-methylbutanoate + NADP(+) = (2S)-2-acetolactate + NADPH + H(+). The enzyme catalyses (2R,3R)-2,3-dihydroxy-3-methylpentanoate + NADP(+) = (S)-2-ethyl-2-hydroxy-3-oxobutanoate + NADPH + H(+). The protein operates within amino-acid biosynthesis; L-isoleucine biosynthesis; L-isoleucine from 2-oxobutanoate: step 2/4. Its pathway is amino-acid biosynthesis; L-valine biosynthesis; L-valine from pyruvate: step 2/4. In terms of biological role, involved in the biosynthesis of branched-chain amino acids (BCAA). Catalyzes an alkyl-migration followed by a ketol-acid reduction of (S)-2-acetolactate (S2AL) to yield (R)-2,3-dihydroxy-isovalerate. In the isomerase reaction, S2AL is rearranged via a Mg-dependent methyl migration to produce 3-hydroxy-3-methyl-2-ketobutyrate (HMKB). In the reductase reaction, this 2-ketoacid undergoes a metal-dependent reduction by NADPH to yield (R)-2,3-dihydroxy-isovalerate. The sequence is that of Ketol-acid reductoisomerase (NADP(+)) from Thermoanaerobacter sp. (strain X514).